A 235-amino-acid chain; its full sequence is MSDVLPAFWAVIPAAGVGARMAADRPKQYLQLGGRTILEHSLGCFLDHPGLKGLVVSLAVDDPYWPALACAHDSRIQRVEGGAERSGSVLNALLHLHAQGAADDDWVLVHDAARPNLSRDDLDKLLGELMDDPVGGLLAVPARDTLKRVDKHGRVLETVDRSLIWQAYTPQMFRLGALHRALADSLVADVAITDEASAMEWAGQAPRLIEGRSDNLKVTRPEDLEWLRQRWSNRR.

This sequence belongs to the IspD/TarI cytidylyltransferase family. IspD subfamily.

It carries out the reaction 2-C-methyl-D-erythritol 4-phosphate + CTP + H(+) = 4-CDP-2-C-methyl-D-erythritol + diphosphate. Its pathway is isoprenoid biosynthesis; isopentenyl diphosphate biosynthesis via DXP pathway; isopentenyl diphosphate from 1-deoxy-D-xylulose 5-phosphate: step 2/6. In terms of biological role, catalyzes the formation of 4-diphosphocytidyl-2-C-methyl-D-erythritol from CTP and 2-C-methyl-D-erythritol 4-phosphate (MEP). The polypeptide is 2-C-methyl-D-erythritol 4-phosphate cytidylyltransferase (Pseudomonas fluorescens (strain ATCC BAA-477 / NRRL B-23932 / Pf-5)).